The sequence spans 369 residues: Chorismate synthase (369 aa).

NADP(+) is bound by residues R48 and R54. FMN-binding positions include 125-127 (RSS), 238-239 (NA), G278, 293-297 (KPTSS), and R319.

Belongs to the chorismate synthase family. In terms of assembly, homotetramer. It depends on FMNH2 as a cofactor.

The catalysed reaction is 5-O-(1-carboxyvinyl)-3-phosphoshikimate = chorismate + phosphate. It functions in the pathway metabolic intermediate biosynthesis; chorismate biosynthesis; chorismate from D-erythrose 4-phosphate and phosphoenolpyruvate: step 7/7. Its function is as follows. Catalyzes the anti-1,4-elimination of the C-3 phosphate and the C-6 proR hydrogen from 5-enolpyruvylshikimate-3-phosphate (EPSP) to yield chorismate, which is the branch point compound that serves as the starting substrate for the three terminal pathways of aromatic amino acid biosynthesis. This reaction introduces a second double bond into the aromatic ring system. The polypeptide is Chorismate synthase (Burkholderia pseudomallei (strain 1106a)).